The chain runs to 916 residues: Beta-scruin (916 aa).

6 Kelch repeats span residues 82–133, 134–187, 188–235, 237–289, 291–341, and 342–390; these read AVLI…YFHG, KVYL…IMDE, RIFV…NNEG, IYVV…TQNK, IWIW…KAGT, and QVFI…GIPV. Positions 393-426 are disordered; sequence SPASDITTSKTTRSGSRKTQKTLKDKQQSDIHAR. The span at 414–425 shows a compositional bias: basic and acidic residues; sequence TLKDKQQSDIHA. 6 Kelch repeats span residues 586 to 637, 638 to 691, 692 to 739, 741 to 793, 795 to 847, and 849 to 896; these read VIIA…YYRG, AIYV…VFND, SIYV…SHGG, LWVM…VCDD, IWLC…ALES, and LYLI…TIPP.

Sperm.

In terms of biological role, may have an enzymatic role. Found the acrosomal vesicle at the anterior of sperm but not in the acrosomal process. This chain is Beta-scruin, found in Limulus polyphemus (Atlantic horseshoe crab).